The sequence spans 243 residues: 6-carboxyhexanoate--CoA ligase (243 aa).

Belongs to the BioW family. As to quaternary structure, homodimer. It depends on Mg(2+) as a cofactor.

It catalyses the reaction heptanedioate + ATP + CoA = 6-carboxyhexanoyl-CoA + AMP + diphosphate. Its pathway is metabolic intermediate metabolism; pimeloyl-CoA biosynthesis; pimeloyl-CoA from pimelate: step 1/1. Catalyzes the transformation of pimelate into pimeloyl-CoA with concomitant hydrolysis of ATP to AMP. In Corynebacterium pseudotuberculosis (strain FRC41), this protein is 6-carboxyhexanoate--CoA ligase.